The sequence spans 419 residues: Serine hydroxymethyltransferase (419 aa).

(6S)-5,6,7,8-tetrahydrofolate is bound by residues Leu121 and 125–127 (GHL). Position 230 is an N6-(pyridoxal phosphate)lysine (Lys230). (6S)-5,6,7,8-tetrahydrofolate is bound by residues Glu246 and 355-357 (SPF).

This sequence belongs to the SHMT family. Homodimer. The cofactor is pyridoxal 5'-phosphate.

The protein resides in the cytoplasm. The catalysed reaction is (6R)-5,10-methylene-5,6,7,8-tetrahydrofolate + glycine + H2O = (6S)-5,6,7,8-tetrahydrofolate + L-serine. The protein operates within one-carbon metabolism; tetrahydrofolate interconversion. Its pathway is amino-acid biosynthesis; glycine biosynthesis; glycine from L-serine: step 1/1. Functionally, catalyzes the reversible interconversion of serine and glycine with tetrahydrofolate (THF) serving as the one-carbon carrier. This reaction serves as the major source of one-carbon groups required for the biosynthesis of purines, thymidylate, methionine, and other important biomolecules. Also exhibits THF-independent aldolase activity toward beta-hydroxyamino acids, producing glycine and aldehydes, via a retro-aldol mechanism. This is Serine hydroxymethyltransferase from Streptococcus suis (strain 98HAH33).